The sequence spans 174 residues: MAEINKPAFKKPDLKKMTPKGERKANRRGAARLAAVQALYQMDIGGAGINETFAEFESFWIGNEVEGEQYLPAEAAFFRDIVAGVVREQKQIDPLIDDLLARGWPLARIDAILRAVMRAGAYELEHRKDIPARVVVSEYVDVAHAFVEKDETGMVNAVLDQIARRFREDEFTRS.

It belongs to the NusB family.

Functionally, involved in transcription antitermination. Required for transcription of ribosomal RNA (rRNA) genes. Binds specifically to the boxA antiterminator sequence of the ribosomal RNA (rrn) operons. This is Transcription antitermination protein NusB from Rhodopseudomonas palustris (strain ATCC BAA-98 / CGA009).